The primary structure comprises 448 residues: Phosphoglucosamine mutase (448 aa).

Residue serine 100 is the Phosphoserine intermediate of the active site. The Mg(2+) site is built by serine 100, aspartate 240, aspartate 242, and aspartate 244. Serine 100 carries the phosphoserine modification.

The protein belongs to the phosphohexose mutase family. Mg(2+) serves as cofactor. Activated by phosphorylation.

It carries out the reaction alpha-D-glucosamine 1-phosphate = D-glucosamine 6-phosphate. Functionally, catalyzes the conversion of glucosamine-6-phosphate to glucosamine-1-phosphate. The sequence is that of Phosphoglucosamine mutase from Bacillus mycoides (strain KBAB4) (Bacillus weihenstephanensis).